A 520-amino-acid chain; its full sequence is GMP synthase [glutamine-hydrolyzing] (520 aa).

The 195-residue stretch at 8-202 (RLLIIDFGSQ…FVRLAGFSGD (195 aa)) folds into the Glutamine amidotransferase type-1 domain. The Nucleophile role is filled by C86. Catalysis depends on residues H177 and E179. The GMPS ATP-PPase domain occupies 203–395 (WTMGAYREQM…LGLPDSFIGR (193 aa)). Residue 230-236 (SGGVDSS) coordinates ATP.

In terms of assembly, homodimer.

It catalyses the reaction XMP + L-glutamine + ATP + H2O = GMP + L-glutamate + AMP + diphosphate + 2 H(+). It functions in the pathway purine metabolism; GMP biosynthesis; GMP from XMP (L-Gln route): step 1/1. Catalyzes the synthesis of GMP from XMP. In Ruegeria sp. (strain TM1040) (Silicibacter sp.), this protein is GMP synthase [glutamine-hydrolyzing].